The following is a 551-amino-acid chain: Cytochrome P450 monooxygenase sdnQ (551 aa).

Residues 1-23 (MDDPSIASGFQQGTGRTTGANGT) form a disordered region. Over residues 8-23 (SGFQQGTGRTTGANGT) the composition is skewed to polar residues. Asparagine 21 is a glycosylation site (N-linked (GlcNAc...) asparagine). A helical membrane pass occupies residues 41 to 57 (CIGTSLLVALLTTIIIY). Cysteine 491 serves as a coordination point for heme.

This sequence belongs to the cytochrome P450 family. Requires heme as cofactor.

It is found in the membrane. It participates in antibiotic biosynthesis. Its function is as follows. Cytochrome P450 monooxygenase; part of the gene cluster that mediates the biosynthesis of sordarin and hypoxysordarin, glycoside antibiotics with a unique tetracyclic diterpene aglycone structure. First, the geranylgeranyl diphosphate synthase sdnC constructs GGDP from farnesyl diphosphate and isopentenyl diphosphate. The diterpene cyclase sdnA then catalyzes the cyclization of GGDP to afford cycloaraneosene. Cycloaraneosene is then hydroxylated four times by the putative cytochrome P450 monooxygenases sdnB, sdnE, sdnF and sdnH to give a hydroxylated cycloaraneosene derivative such as cycloaraneosene-8,9,13,19-tetraol. Although the order of the hydroxylations is unclear, at least C8, C9 and C13 of the cycloaraneosene skeleton are hydroxylated before the sordaricin formation. Dehydration of the 13-hydroxy group of the hydroxylated cycloaraneosene derivative might be catalyzed by an unassigned hypothetical protein such as sdnG and sdnP to construct the cyclopentadiene moiety. The FAD-dependent oxidoreductase sdnN is proposed to catalyze the oxidation at C9 of the hydroxylated cycloaraneosene derivative and also catalyze the Baeyer-Villiger oxidation to give the lactone intermediate. The presumed lactone intermediate would be hydrolyzed to give an acrolein moiety and a carboxylate moiety. Then, [4+2]cycloaddition would occur between the acrolein moiety and the cyclopentadiene moiety to give sordaricin. SdnN might also be involved in the [4+2]cycloaddition after the hypothesized oxidation to accommodate the oxidized product and prompt the [4+2]cycloaddition. GDP-6-deoxy-D-altrose may be biosynthesized from GDP-D-mannose by the putative GDP-mannose-4,6-dehydratase sdnI and the short-chain dehydrogenase sdnK. The glycosyltransferase sdnJ catalyzes the attachment of 6-deoxy-D-altrose onto the 19-hydroxy group of sordaricin to give 4'-O-demethylsordarin. The methyltransferase sdnD would complete the biosynthesis of sordarin. Sordarin can be further modified into hypoxysordarin. The unique acyl chain at the 3'-hydroxy group of hypoxysordarin would be constructed by an iterative type I PKS sdnO and the trans-acting polyketide methyltransferase sdnL. SdnL would be responsible for the introduction of an alpha-methyl group of the polyketide chain. Alternatively, the beta-lactamase-like protein sdnR might be responsible for the cleavage and transfer of the polyketide chain from the PKS sdnO to sordarin. Two putative cytochrome P450 monooxygenases, sdnQ and sdnT, might catalyze the epoxidations of the polyketide chain to complete the biosynthesis of hypoxysordarin. Transcriptional regulators sdnM and sdnS are presumably encoded for the transcriptional regulation of the expression of the sdn gene cluster. This is Cytochrome P450 monooxygenase sdnQ from Sordaria araneosa (Pleurage araneosa).